We begin with the raw amino-acid sequence, 440 residues long: R3H and coiled-coil domain-containing protein 1 (440 aa).

The R3H domain maps to 16–81 (NDFVHRIQEE…KRRTVICHQD (66 aa)). The tract at residues 154 to 225 (TSVLKREAPA…LGPESQSGKG (72 aa)) is disordered. Over residues 157–168 (LKREAPAGRDPE) the composition is skewed to basic and acidic residues. Residue S236 is modified to Phosphoserine. Residues 242-300 (LEKGKESLLEKRLVAEEEEDEEEVEEDGPSSCSEDDYSELLQEITDNLTKKEIQIEKIH) are a coiled coil. A disordered region spans residues 254–276 (LVAEEEEDEEEVEEDGPSSCSED). The segment covering 257 to 276 (EEEEDEEEVEEDGPSSCSED) has biased composition (acidic residues).

This Homo sapiens (Human) protein is R3H and coiled-coil domain-containing protein 1.